We begin with the raw amino-acid sequence, 273 residues long: Undecaprenyl-diphosphatase (273 aa).

The next 7 membrane-spanning stretches (helical) occupy residues 6–26 (SLLI…LPVS), 45–65 (AKTF…VMFW), 90–110 (LTLI…LVFH), 116–136 (LFNP…LIAA), 190–210 (YAAS…ATVL), 222–242 (ADIP…LIAI), and 252–272 (ISFI…YVVF).

This sequence belongs to the UppP family.

The protein localises to the cell inner membrane. The enzyme catalyses di-trans,octa-cis-undecaprenyl diphosphate + H2O = di-trans,octa-cis-undecaprenyl phosphate + phosphate + H(+). Functionally, catalyzes the dephosphorylation of undecaprenyl diphosphate (UPP). Confers resistance to bacitracin. This chain is Undecaprenyl-diphosphatase, found in Salmonella arizonae (strain ATCC BAA-731 / CDC346-86 / RSK2980).